The primary structure comprises 1053 residues: Phosphoenolpyruvate carboxylase (1053 aa).

Histidine 246 is an active-site residue. The span at 461–473 (RNTRLQQQQEKDP) shows a compositional bias: basic and acidic residues. The segment at 461–480 (RNTRLQQQQEKDPTTPLPEY) is disordered. Lysine 699 is an active-site residue.

Belongs to the PEPCase type 1 family. Mg(2+) serves as cofactor.

The enzyme catalyses oxaloacetate + phosphate = phosphoenolpyruvate + hydrogencarbonate. Its function is as follows. Forms oxaloacetate, a four-carbon dicarboxylic acid source for the tricarboxylic acid cycle. This chain is Phosphoenolpyruvate carboxylase (ppc), found in Synechococcus sp. (strain ATCC 27144 / PCC 6301 / SAUG 1402/1) (Anacystis nidulans).